We begin with the raw amino-acid sequence, 252 residues long: Putative pinene synthase (252 aa).

This sequence belongs to the terpene synthase family. Tpsa subfamily.

The sequence is that of Putative pinene synthase from Fragaria ananassa (Strawberry).